A 256-amino-acid chain; its full sequence is Thiazole synthase (256 aa).

The active-site Schiff-base intermediate with DXP is lysine 91. 1-deoxy-D-xylulose 5-phosphate-binding positions include glycine 152, 179 to 180 (AG), and 201 to 202 (NT).

It belongs to the ThiG family. In terms of assembly, homotetramer. Forms heterodimers with either ThiH or ThiS.

It localises to the cytoplasm. It catalyses the reaction [ThiS sulfur-carrier protein]-C-terminal-Gly-aminoethanethioate + 2-iminoacetate + 1-deoxy-D-xylulose 5-phosphate = [ThiS sulfur-carrier protein]-C-terminal Gly-Gly + 2-[(2R,5Z)-2-carboxy-4-methylthiazol-5(2H)-ylidene]ethyl phosphate + 2 H2O + H(+). Its pathway is cofactor biosynthesis; thiamine diphosphate biosynthesis. Functionally, catalyzes the rearrangement of 1-deoxy-D-xylulose 5-phosphate (DXP) to produce the thiazole phosphate moiety of thiamine. Sulfur is provided by the thiocarboxylate moiety of the carrier protein ThiS. In vitro, sulfur can be provided by H(2)S. This chain is Thiazole synthase, found in Erwinia tasmaniensis (strain DSM 17950 / CFBP 7177 / CIP 109463 / NCPPB 4357 / Et1/99).